Here is an 80-residue protein sequence, read N- to C-terminus: Serine palmitoyltransferase-regulating protein TSC3 (80 aa).

A helical membrane pass occupies residues 54–74 (FDSFFLHVFFLTIFSLSFFGI).

As to quaternary structure, interacts with the serine palmitoyltransferase complex LCB1-LCB2. Component of the SPOTS complex, at least composed of LCB1/2 (LCB1 and/or LCB2), ORM1/2 (ORM1 and/or ORM2), SAC1 and TSC3.

It is found in the endoplasmic reticulum membrane. Stimulates the activity of serine palmitoyltransferase (SPT), and thus plays a role in the biosynthesis of sphingolipids. The polypeptide is Serine palmitoyltransferase-regulating protein TSC3 (TSC3) (Saccharomyces cerevisiae (strain ATCC 204508 / S288c) (Baker's yeast)).